The following is a 100-amino-acid chain: Apolipoprotein C-II (100 aa).

Residues Met-1–Gly-22 form the signal peptide. The segment at Ser-66–Met-74 is lipid binding. The interval Ser-78–Glu-100 is lipoprotein lipase cofactor.

The protein belongs to the apolipoprotein C2 family. Post-translationally, proapolipoprotein C-II is synthesized as a sialic acid containing glycoprotein which is subsequently desialylated prior to its proteolytic processing. Proapolipoprotein C-II, the major form found in plasma undergoes proteolytic cleavage of its N-terminal hexapeptide to generate the mature form apolipoprotein C-II, which occurs as the minor form in plasma.

The protein localises to the secreted. Functionally, component of chylomicrons, very low-density lipoproteins (VLDL), low-density lipoproteins (LDL), and high-density lipoproteins (HDL) in plasma. Plays an important role in lipoprotein metabolism as an activator of lipoprotein lipase. The sequence is that of Apolipoprotein C-II (APOC2) from Cricetulus griseus (Chinese hamster).